The sequence spans 116 residues: Selenoprotein H (116 aa).

N6-acetyllysine is present on lysine 20. The segment at residues 35–38 is a cross-link (cysteinyl-selenocysteine (Cys-Sec); redox-active); sequence CTSU. A non-standard amino acid (selenocysteine) is located at residue selenocysteine 38.

The protein belongs to the SelWTH family.

May be involved in a redox-related process. The chain is Selenoprotein H from Mus musculus (Mouse).